We begin with the raw amino-acid sequence, 754 residues long: Phosphoribosylformylglycinamidine synthase subunit PurL (754 aa).

The tract at residues 1 to 21 (MLDTVEHAATTPDQPQPYGEL) is disordered. H54 is an active-site residue. The ATP site is built by Y57 and K101. E103 contacts Mg(2+). Substrate-binding positions include 104 to 107 (SHNH) and R126. H105 (proton acceptor) is an active-site residue. Residue D127 participates in Mg(2+) binding. Q252 contributes to the substrate binding site. D280 provides a ligand contact to Mg(2+). Residue 324–326 (ESQ) participates in substrate binding. Residues N512 and G549 each contribute to the ATP site. N550 provides a ligand contact to Mg(2+). Residue S552 participates in substrate binding.

Belongs to the FGAMS family. In terms of assembly, monomer. Part of the FGAM synthase complex composed of 1 PurL, 1 PurQ and 2 PurS subunits.

Its subcellular location is the cytoplasm. It carries out the reaction N(2)-formyl-N(1)-(5-phospho-beta-D-ribosyl)glycinamide + L-glutamine + ATP + H2O = 2-formamido-N(1)-(5-O-phospho-beta-D-ribosyl)acetamidine + L-glutamate + ADP + phosphate + H(+). The protein operates within purine metabolism; IMP biosynthesis via de novo pathway; 5-amino-1-(5-phospho-D-ribosyl)imidazole from N(2)-formyl-N(1)-(5-phospho-D-ribosyl)glycinamide: step 1/2. Functionally, part of the phosphoribosylformylglycinamidine synthase complex involved in the purines biosynthetic pathway. Catalyzes the ATP-dependent conversion of formylglycinamide ribonucleotide (FGAR) and glutamine to yield formylglycinamidine ribonucleotide (FGAM) and glutamate. The FGAM synthase complex is composed of three subunits. PurQ produces an ammonia molecule by converting glutamine to glutamate. PurL transfers the ammonia molecule to FGAR to form FGAM in an ATP-dependent manner. PurS interacts with PurQ and PurL and is thought to assist in the transfer of the ammonia molecule from PurQ to PurL. This is Phosphoribosylformylglycinamidine synthase subunit PurL from Mycobacterium bovis (strain ATCC BAA-935 / AF2122/97).